An 89-amino-acid chain; its full sequence is RNA-binding protein Hfq (89 aa).

Residues 9–68 (DPFLNALRRERVPVSIYLVNGIKLQGQVESFDQFVILLKNTVSQMVYKHAISTVVPARAL) form the Sm domain.

The protein belongs to the Hfq family. Homohexamer.

RNA chaperone that binds small regulatory RNA (sRNAs) and mRNAs to facilitate mRNA translational regulation in response to envelope stress, environmental stress and changes in metabolite concentrations. Also binds with high specificity to tRNAs. This is RNA-binding protein Hfq from Shewanella denitrificans (strain OS217 / ATCC BAA-1090 / DSM 15013).